The following is a 498-amino-acid chain: Cytotardin (498 aa).

Residues 18 to 58 (DRVHSKDELQALNTRLAKYIDKIRNLENENVALQRQLQTAE) are coil 1A. Positions 22–378 (SKDELQALNT…KLLSGEEQRL (357 aa)) constitute an IF rod domain. The tract at residues 59–69 (QTTVTEIHRVS) is linker 1. A coil 1B region spans residues 70 to 213 (KNYDEELAKL…ENLREEKSQR (144 aa)). The linker 2 stretch occupies residues 214–231 (QYLLHDLQRGLQDEFESK). Positions 232–371 (LVQQLNELRA…AELATYNKLL (140 aa)) are coil 2. Residues 381–425 (DGSGTVIRRPTGGATGTGSGIYGGTGSGGYSRDIGSTTTTKTTYT) are disordered. Residues 393–409 (GATGTGSGIYGGTGSGG) are compositionally biased toward gly residues.

It belongs to the intermediate filament family.

The protein localises to the cytoplasm. It is found in the cell cortex. Functionally, intermediate filament (IF) protein that forms both short filaments and extensive cytoskeletal networks which most likely are homomeric. Some of the cytotardin arrays display cage-like perinuclear structures, while others are located in the periphery close to the cell membrane. The entire tardigrade body is ensheathed by a grid of belt-like filaments formed by the cytotardin protein, which retain their integrity even in contracted specimens. The belt-like structures encircling each epidermal cell might help to resist the shearing forces that arise during freezing and thawing cycles, whereas the dense meshwork at the basis of each claw and around the stylets might provide the tissue stability necessary for locomotion and feeding. The sequence is that of Cytotardin from Hypsibius exemplaris (Freshwater tardigrade).